A 365-amino-acid polypeptide reads, in one-letter code: uncharacterized protein (365 aa).

2 disordered regions span residues 218–262 (QRPS…AEAA) and 315–342 (PRLPEPPVPPDGSGSRMEFRNLSDRTPC). Basic and acidic residues-rich tracts occupy residues 239 to 257 (PDNRVQEHREELSQTKDPE) and 331 to 341 (MEFRNLSDRTP).

This is an uncharacterized protein from Mus musculus (Mouse).